We begin with the raw amino-acid sequence, 927 residues long: DIS3-like exonuclease 2 (927 aa).

A compositionally biased stretch (basic residues) spans 1–12; that stretch reads MDLKPNIRRKEK. The tract at residues 1 to 168 is disordered; it reads MDLKPNIRRK…DTNNATEMVS (168 aa). Basic and acidic residues predominate over residues 13–31; it reads RNLLKGEAALEKKGSIDRK. Over residues 97-106 the composition is skewed to basic residues; the sequence is VKPKAKKKNS. Positions 107-152 are enriched in basic and acidic residues; sequence KEKISKSSKQDEHKTDVHKESVSKLSKNLESRNNRDENSAKREKNN. Residues 153–168 show a composition bias toward polar residues; that stretch reads SHQVEADTNNATEMVS. Asp-453 and Asp-462 together coordinate Mg(2+).

The protein belongs to the RNR ribonuclease family. DIS3L2 subfamily. The cofactor is Mg(2+). It depends on Mn(2+) as a cofactor.

The protein localises to the cytoplasm. It localises to the P-body. Functionally, 3'-5'-exoribonuclease that specifically recognizes RNAs polyuridylated at their 3' end and mediates their degradation. Component of an exosome-independent RNA degradation pathway that mediates degradation of cytoplasmic mRNAs that have been deadenylated and subsequently uridylated at their 3'. In Schizosaccharomyces pombe (strain 972 / ATCC 24843) (Fission yeast), this protein is DIS3-like exonuclease 2 (dis32).